Here is a 245-residue protein sequence, read N- to C-terminus: MNPEEFRQALLDHGIALTDAQMAQFARYYQLLVQTNEHLNLTAITAETEVYLKHFYDSLTGAFAYPKLQSQALTLCDIGAGAGFPSLPLKIAFPQLEVTIVDSLNKRINFLADLCDDLGLTGVYLVHDRAETFAAKGSPYREQFDLVTARAVARLVVLGELCLPAAKVGGAFLAYKASAVNDELKLATGAINKLGGQVAGTTKLTLPTKPEAEERNLVVIDKVAKTPGKYPRRPGVPAKKPLINV.

S-adenosyl-L-methionine contacts are provided by residues Gly-79, Phe-84, 130 to 131 (AE), and Arg-150.

Belongs to the methyltransferase superfamily. RNA methyltransferase RsmG family.

The protein localises to the cytoplasm. Specifically methylates the N7 position of a guanine in 16S rRNA. The sequence is that of Ribosomal RNA small subunit methyltransferase G from Limosilactobacillus fermentum (strain NBRC 3956 / LMG 18251) (Lactobacillus fermentum).